We begin with the raw amino-acid sequence, 236 residues long: MPPKLKATRKSVSFQHLSDEDISKSQYILKTEFPRIETSTLTIPFHSALLIFGLYKFGLTNDIYGVMLKGIFSLIPLQLLYGYLITTRSEKEKKTKSHNNSENVPLLLAGGIVISLVLSVPLFVALILLGAPLASHLKETYLLSIHLSLLIFYPSLVLYKYDYKSLVKFLDADGVYNAIAKNQILLSAVLAVIGTWFGVIPIPLDWDRDWQQWPITLLTGAYIGSFVGGIACFLFQ.

A run of 2 helical transmembrane segments spans residues 40-60 (TLTI…FGLT) and 65-85 (GVML…GYLI). The N-linked (GlcNAc...) asparagine glycan is linked to N99. The next 4 helical transmembrane spans lie at 107–127 (LLAG…VALI), 139–159 (ETYL…LVLY), 184–204 (ILLS…PIPL), and 215–235 (ITLL…CFLF).

Belongs to the PIGF family.

The protein resides in the endoplasmic reticulum membrane. It participates in glycolipid biosynthesis; glycosylphosphatidylinositol-anchor biosynthesis. Its function is as follows. Acts in the GPI biosynthetic pathway between GlcNAc-PI synthesis and GPI transfer to protein. This Debaryomyces hansenii (strain ATCC 36239 / CBS 767 / BCRC 21394 / JCM 1990 / NBRC 0083 / IGC 2968) (Yeast) protein is Glycosylphosphatidylinositol anchor biosynthesis protein 11 (GPI11).